A 104-amino-acid polypeptide reads, in one-letter code: Small ribosomal subunit protein uS10 (104 aa).

Belongs to the universal ribosomal protein uS10 family. In terms of assembly, part of the 30S ribosomal subunit.

Functionally, involved in the binding of tRNA to the ribosomes. The polypeptide is Small ribosomal subunit protein uS10 (Alkaliphilus metalliredigens (strain QYMF)).